The primary structure comprises 400 residues: NADH-ubiquinone oxidoreductase 49 kDa subunit (400 aa).

Belongs to the complex I 49 kDa subunit family.

The protein resides in the mitochondrion. It carries out the reaction a ubiquinone + NADH + 5 H(+)(in) = a ubiquinol + NAD(+) + 4 H(+)(out). Its function is as follows. Core subunit of the mitochondrial membrane respiratory chain NADH dehydrogenase (Complex I) that is believed to belong to the minimal assembly required for catalysis. Complex I functions in the transfer of electrons from NADH to the respiratory chain. The immediate electron acceptor for the enzyme is believed to be ubiquinone. Component of the iron-sulfur (IP) fragment of the enzyme. Component of the iron-sulfur (IP) fragment of the enzyme. This is NADH-ubiquinone oxidoreductase 49 kDa subunit (NAD7) from Paramecium tetraurelia.